Reading from the N-terminus, the 184-residue chain is U3 small nucleolar ribonucleoprotein protein IMP3 (184 aa).

The S4 RNA-binding domain occupies 109–175 (RRLPTVLLKL…IKRHVLEYNE (67 aa)).

The protein belongs to the universal ribosomal protein uS4 family. Part of the small subunit (SSU) processome, composed of more than 70 proteins and the RNA chaperone small nucleolar RNA (snoRNA) U3. Component of a heterotrimeric complex containing IMP3, IMP4 and MPHOSPH10. Interacts with MPHOSPH10.

It is found in the nucleus. It localises to the nucleolus. Component of the 60-80S U3 small nucleolar ribonucleoprotein (U3 snoRNP). Required for the early cleavages during pre-18S ribosomal RNA processing. Part of the small subunit (SSU) processome, first precursor of the small eukaryotic ribosomal subunit. During the assembly of the SSU processome in the nucleolus, many ribosome biogenesis factors, an RNA chaperone and ribosomal proteins associate with the nascent pre-rRNA and work in concert to generate RNA folding, modifications, rearrangements and cleavage as well as targeted degradation of pre-ribosomal RNA by the RNA exosome. This chain is U3 small nucleolar ribonucleoprotein protein IMP3, found in Homo sapiens (Human).